The primary structure comprises 884 residues: Alanine--tRNA ligase (884 aa).

Zn(2+) is bound by residues H572, H576, C673, and H677.

It belongs to the class-II aminoacyl-tRNA synthetase family. The cofactor is Zn(2+).

Its subcellular location is the cytoplasm. It catalyses the reaction tRNA(Ala) + L-alanine + ATP = L-alanyl-tRNA(Ala) + AMP + diphosphate. In terms of biological role, catalyzes the attachment of alanine to tRNA(Ala) in a two-step reaction: alanine is first activated by ATP to form Ala-AMP and then transferred to the acceptor end of tRNA(Ala). Also edits incorrectly charged Ser-tRNA(Ala) and Gly-tRNA(Ala) via its editing domain. In Xylella fastidiosa (strain M23), this protein is Alanine--tRNA ligase.